Consider the following 610-residue polypeptide: UvrABC system protein C (610 aa).

The GIY-YIG domain maps to 16-94; it reads SQPGVYRMYD…IKLYQPRYNV (79 aa). The region spanning 204-239 is the UVR domain; that stretch reads DQVLTQLISRMETASQNLEFEEAARIRDQIQAVRRV.

Belongs to the UvrC family. In terms of assembly, interacts with UvrB in an incision complex.

The protein resides in the cytoplasm. The UvrABC repair system catalyzes the recognition and processing of DNA lesions. UvrC both incises the 5' and 3' sides of the lesion. The N-terminal half is responsible for the 3' incision and the C-terminal half is responsible for the 5' incision. This is UvrABC system protein C from Escherichia coli (strain SMS-3-5 / SECEC).